The chain runs to 192 residues: Adenylate kinase (192 aa).

10 to 18 (GVPGVGGTT) contributes to the ATP binding site.

It belongs to the archaeal adenylate kinase family. In terms of assembly, monomer.

The protein resides in the cytoplasm. It carries out the reaction AMP + ATP = 2 ADP. The chain is Adenylate kinase from Methanococcus maripaludis (strain C6 / ATCC BAA-1332).